Reading from the N-terminus, the 276-residue chain is Zinc transporter ZTP29 (276 aa).

Over 1–6 (MDSQML) the chain is Cytoplasmic. The helical transmembrane segment at 7–27 (VALGLSLVGGLSTSLGALFVV) threads the bilayer. Residues 28–35 (LSETPNMK) lie on the Lumenal side of the membrane. A helical transmembrane segment spans residues 36–56 (MLGLLQGFASGLMLSISFLDL). The Cytoplasmic segment spans residues 57 to 63 (AHNAINS). Residues 64 to 84 (IGFFKANLWFFGGVIFFACIT) traverse the membrane as a helical segment. Over 85 to 123 (KFIPEPTLGPSTDGKRRKKNGDEGGKDMMKKHRKQVLYS) the chain is Lumenal. Residues 124 to 144 (GLITAIGISLHNFPEGMAVFL) traverse the membrane as a helical segment. The Cytoplasmic portion of the chain corresponds to 145–156 (GSIKGMRVGVNL). The helical transmembrane segment at 157–177 (ALAIALHNIPEGVAVALPIYF) threads the bilayer. At 178 to 187 (ATESKWQAFK) the chain is on the lumenal side. Residues 188-208 (LATLSGLAEPLGVIIVAYLFP) traverse the membrane as a helical segment. At 209 to 219 (RSLSPEILEGL) the chain is on the cytoplasmic side. A helical membrane pass occupies residues 220-240 (LGAVGGIMAFLTLHEMLPLAF). The Lumenal segment spans residues 241–250 (DYAGQKQAVK). Residues 251–271 (AVFFGMACMSASLYFLELSLP) form a helical membrane-spanning segment. Residues 272 to 276 (ETMSL) are Cytoplasmic-facing.

It belongs to the ZIP transporter (TC 2.A.5) family. ZupT subfamily. As to expression, expressed in hypocotyls, cotyledons, leaves and anthers.

It localises to the endoplasmic reticulum membrane. Functionally, zinc transporter involved response to salt stress. May act through the regulation of zinc levels required to induce the unfolded protein response (UPR) pathway. The sequence is that of Zinc transporter ZTP29 (ZTP29) from Arabidopsis thaliana (Mouse-ear cress).